Here is a 40-residue protein sequence, read N- to C-terminus: Photosystem II reaction center protein X (40 aa).

The Lumenal portion of the chain corresponds to 1 to 11 (TITPSLKGFFI). The helical transmembrane segment at 12 to 28 (GLLSGAVVLGLTFAVLI) threads the bilayer. Residues 29–40 (AISQIDKVQRSL) are Cytoplasmic-facing.

Belongs to the PsbX family. Type 1 subfamily. In terms of assembly, PSII is composed of 1 copy each of membrane proteins PsbA, PsbB, PsbC, PsbD, PsbE, PsbF, PsbH, PsbI, PsbJ, PsbK, PsbL, PsbM, PsbT, PsbX, PsbY, PsbZ, Psb30/Ycf12, peripheral proteins PsbO, CyanoQ (PsbQ), PsbU, PsbV and a large number of cofactors. It forms dimeric complexes. Requires PSII binds multiple chlorophylls, carotenoids and specific lipids. as cofactor.

The protein localises to the cellular thylakoid membrane. Functionally, involved in the binding and/or turnover of quinones at the Q(B) site of photosystem II (PSII). PSII is a light-driven water plastoquinone oxidoreductase, using light energy to abstract electrons from H(2)O, generating a proton gradient subsequently used for ATP formation. The polypeptide is Photosystem II reaction center protein X (Thermostichus vulcanus (Synechococcus vulcanus)).